The sequence spans 591 residues: Paxillin (591 aa).

The residue at position 1 (Met1) is an N-acetylmethionine. The short motif at 3-15 (DLDALLADLESTT) is the LD motif 1 element. Positions 17 to 138 (HISKRPVFLS…SSPTVMSTSL (122 aa)) are disordered. Tyr31 bears the Phosphotyrosine; by PTK6 mark. Over residues 45 to 54 (VPPPVPPPPS) the composition is skewed to pro residues. Polar residues predominate over residues 69–101 (WQPSGSRFIHQQPQSSSPVYGSSAKTSSVSNPQ). Phosphoserine is present on residues Ser83 and Ser85. Tyr88 is modified (phosphotyrosine). Ser106 carries the post-translational modification Phosphoserine. Residue Tyr118 is modified to Phosphotyrosine; by PTK6. Ser119, Ser126, and Ser130 each carry phosphoserine. Polar residues predominate over residues 121 to 137 (PNKQKSAESSPTVMSTS). Position 132 is a phosphothreonine (Thr132). 3 positions are modified to phosphoserine: Ser137, Ser140, and Ser143. An LD motif 2 motif is present at residues 144 to 156 (ELDRLLLELNAVQ). Residues 156-213 (QHNPPGFPADEANSGPPLPGALSPHYGVPETNSPLGGKAGPLTKEKPKRNGGRGLEDV) form a disordered region. At Tyr181 the chain carries Phosphotyrosine. The short motif at 216–228 (SVESLLDELESSV) is the LD motif 3 element. Ser230 is subject to Phosphoserine. Residues 237–260 (VNQGEMSSPQRVTSTQQQTRISAS) are disordered. The residue at position 244 (Ser244) is a Phosphoserine; by CDK5. Residues Ser250, Ser258, Ser261, and Ser272 each carry the phosphoserine modification. The LD motif 4 signature appears at 265-276 (ELDELMASLSDF). Positions 289–300 (RCWAADWPRDGG) are enriched in basic and acidic residues. The segment at 289–335 (RCWAADWPRDGGRSSPGGQDEGGFMAQGKTGSSSPPGGPPKPGSQLD) is disordered. Residues Ser303, Ser322, Ser332, and Ser340 each carry the phosphoserine modification. The LD motif 5 signature appears at 333-345 (QLDSMLGSLQSDL). 4 consecutive LIM zinc-binding domains span residues 356 to 415 (GVCG…LFSP), 416 to 473 (RCYY…DMFA), 474 to 533 (PKCG…RRGS), and 534 to 591 (LCSG…KLFC). Ser533 carries the post-translational modification Phosphoserine.

The protein belongs to the paxillin family. As to quaternary structure, binds to vinculin and to the SH3 domain of SRC. Interacts with GIT1, NUDT16L1/SDOS, PARVA, PARVB, SORBS1 and TGFB1I1. Component of cytoplasmic complexes, which also contain GIT1, ARHGEF6 and PAK1. Binds ASAP2. Interacts with RNF5 and PDCD10. Interacts with NEK3 and this interaction is prolactin-dependent. Interacts with PTK2/FAK1 and PTK2B/PYK2. Interacts with PTK6. Interacts with CD36. Interacts (via cytoplasmic domain) with CEACAM1; the interaction is phosphotyrosyl-dependent. Interacts with PXN; this complex stabilizes actin dynamics. Interacts with TRIM15. Interacts with PAK4; PAK4 acts as a scaffold to suppport PAXI phosphorylation at Ser-272. In terms of processing, phosphorylated by MAPK1/ERK2. Phosphorylated on tyrosine residues during integrin-mediated cell adhesion, embryonic development, fibroblast transformation and following stimulation of cells by mitogens. Phosphorylation at Ser-244 by CDK5 reduces its interaction with PTK2/FAK1 in matrix-cell focal adhesions (MCFA) during oligodendrocytes (OLs) differentiation. Phosphorylation at Tyr-31 and Tyr-118 by PTK6 promote the activation of RAC1 via CRK/CrKII, thereby promoting migration and invasion. Phosphorylation at Ser-250 by SLK is required for PXN redistribution and cell motility. Phosphorylation at Ser-272 promotes focal adhesion disassembly during cell migration.

It is found in the cytoplasm. Its subcellular location is the cytoskeleton. The protein resides in the cell junction. The protein localises to the focal adhesion. It localises to the cell cortex. Functionally, cytoskeletal protein involved in actin-membrane attachment at sites of cell adhesion to the extracellular matrix (focal adhesion). Recruits other proteins such as TRIM15 to focal adhesion. The chain is Paxillin (PXN) from Pongo abelii (Sumatran orangutan).